Consider the following 462-residue polypeptide: Probable serine/threonine-protein kinase DDB_G0286841 (462 aa).

The region spanning 64-358 is the Protein kinase domain; the sequence is FNFLKVISKG…VDEVKCHPFF (295 aa). ATP contacts are provided by residues 70–78 and K93; that span reads ISKGGFGKV. Catalysis depends on D188, which acts as the Proton acceptor. The region spanning 359 to 462 is the AGC-kinase C-terminal domain; the sequence is SEINWKIYED…LFIDFDFPTY (104 aa). Residues 414–439 show a composition bias toward low complexity; sequence NIYKNNNNNNNNNNNNNNNNNNNNNN. The tract at residues 414 to 447 is disordered; sequence NIYKNNNNNNNNNNNNNNNNNNNNNNDDNDDENN.

The protein belongs to the protein kinase superfamily. AGC Ser/Thr protein kinase family.

It carries out the reaction L-seryl-[protein] + ATP = O-phospho-L-seryl-[protein] + ADP + H(+). The catalysed reaction is L-threonyl-[protein] + ATP = O-phospho-L-threonyl-[protein] + ADP + H(+). The protein is Probable serine/threonine-protein kinase DDB_G0286841 of Dictyostelium discoideum (Social amoeba).